A 121-amino-acid chain; its full sequence is Large ribosomal subunit protein bL21c (121 aa).

The protein belongs to the bacterial ribosomal protein bL21 family. Part of the 50S ribosomal subunit.

The protein resides in the plastid. Its subcellular location is the chloroplast. Functionally, this protein binds to 23S rRNA. The sequence is that of Large ribosomal subunit protein bL21c from Chaetosphaeridium globosum (Charophycean green alga).